Consider the following 579-residue polypeptide: Glutamine--tRNA ligase (579 aa).

The short motif at 41 to 51 is the 'HIGH' region element; that stretch reads PEPNGYLHIGH. Residues 42 to 44 and 48 to 54 contribute to the ATP site; these read EPN and HIGHAKA. L-glutamine-binding residues include Asp74 and Tyr218. Residues Thr237, 285 to 286, and 293 to 295 contribute to the ATP site; these read RL and MSK. A 'KMSKS' region motif is present at residues 292–296; it reads VMSKR.

The protein belongs to the class-I aminoacyl-tRNA synthetase family. As to quaternary structure, monomer.

The protein localises to the cytoplasm. The enzyme catalyses tRNA(Gln) + L-glutamine + ATP = L-glutaminyl-tRNA(Gln) + AMP + diphosphate. The sequence is that of Glutamine--tRNA ligase from Xanthomonas axonopodis pv. citri (strain 306).